The chain runs to 662 residues: MRTARFTLDPAFTVGAVNPRLFGSFVEHLGRCVYTGVFEPGHPTADAEGLRQDVLELVRELGVTAVRYPGGNFVSGYKWEDSVGPVEDRPRRLDLAWRSTETNRFGLSEYIAFLKKIGPQAEPMMAVNLGTRGVAEALELQEYANHPSGTALSDLRAEHGDKDPFGIRLWCLGNEMDGPWQTGHKTAEEYGRVAAETARAMRQIDPDVELVACGSSGQSMETFAEWEATVLKETYDLVDHISLHAYYEPHDGDVDSFLASAVDMESFIENVVATCDHVGARLKSKKKINLSFDEWNVWYMTKTQAEVSALDWPEAPRLLEDNYSVMDAVVFGSLLIALLRHADRVTVACLAQLVNVIAPIMTEPGGPAWRQTTFFPFSQASKYGRGEVLDVRVDSPTYDTAKYGEADLLHATAVVRARRSVTVFAVNRSRTGALPLEVALSGLELTEVVEHSALADADPDARNTLAEPERVVPHPVDGTSLRDGRLTAALEPLSWNSIRCADPAPGQPPRRPGEGTGFTGTPPAAPPSSSSAPRPDPTARRSPDRTARARVLAAARVRRMPFGRTKVCGAPVRPPTYAPRFQPFRKTWTRWAPAPRSGSPSRRSPTEASIPGGTSSRNVVRYQVTPWRRSPPGSAPGTPAPTRRRRTRAGASRGAPRTARRC.

3 residues coordinate alpha-L-arabinofuranose: Glu27, Asn72, and Asn174. Catalysis depends on Glu175, which acts as the Proton donor/acceptor. The alpha-L-arabinofuranose site is built by Tyr246, Glu294, and Gln352. Glu294 acts as the Nucleophile in catalysis. Disordered regions lie at residues 454–483 (LADA…SLRD), 497–548 (SIRC…RTAR), and 588–662 (WTRW…ARRC). The span at 519-533 (TGTPPAAPPSSSSAP) shows a compositional bias: low complexity. Basic and acidic residues predominate over residues 537–547 (PTARRSPDRTA). Low complexity-rich tracts occupy residues 590 to 603 (RWAP…PSRR), 628 to 641 (RRSP…TPAP), and 649 to 662 (AGAS…ARRC).

This sequence belongs to the glycosyl hydrolase 51 family. In terms of assembly, homohexamer; trimer of dimers.

It is found in the cytoplasm. It carries out the reaction Hydrolysis of terminal non-reducing alpha-L-arabinofuranoside residues in alpha-L-arabinosides.. It functions in the pathway glycan metabolism; L-arabinan degradation. Its function is as follows. Involved in the degradation of arabinan and is a key enzyme in the complete degradation of the plant cell wall. Catalyzes the cleavage of terminal alpha-(1-&gt;5)-arabinofuranosyl bonds in different hemicellulosic homopolysaccharides (arabino-oligoxylosides, branched and debranched arabinans). It acts rapidly on the short-chain arabino-oligoxylosides from digestion of xylan with xylanases. It hydrolyzes slowly arabinan and arabinoxylan from wheat and rye flour. In Streptomyces lividans, this protein is Intracellular exo-alpha-(1-&gt;5)-L-arabinofuranosidase.